A 593-amino-acid polypeptide reads, in one-letter code: Probable serine/threonine-protein kinase fhkA (593 aa).

The interval 1-24 (MSQTNYIPSTPNKSTPPSELSSTP) is disordered. Residues 54 to 111 (ITIGRSKTCNIVVPELIVSGKHCIITRADAIENGNTNYGLLMIQDQSTNGTFINGKLI) enclose the FHA domain. The Protein kinase domain occupies 180–472 (YDFIKELGSG…VEQALNHPWI (293 aa)). ATP-binding positions include 186–194 (LGSGNFSVV) and Lys209. Asp307 functions as the Proton acceptor in the catalytic mechanism.

Belongs to the protein kinase superfamily. CAMK Ser/Thr protein kinase family. CHK2 subfamily.

It catalyses the reaction L-seryl-[protein] + ATP = O-phospho-L-seryl-[protein] + ADP + H(+). It carries out the reaction L-threonyl-[protein] + ATP = O-phospho-L-threonyl-[protein] + ADP + H(+). The sequence is that of Probable serine/threonine-protein kinase fhkA (fhkA) from Dictyostelium discoideum (Social amoeba).